The sequence spans 180 residues: Large ribosomal subunit protein uL6 (180 aa).

This sequence belongs to the universal ribosomal protein uL6 family. In terms of assembly, part of the 50S ribosomal subunit.

In terms of biological role, this protein binds to the 23S rRNA, and is important in its secondary structure. It is located near the subunit interface in the base of the L7/L12 stalk, and near the tRNA binding site of the peptidyltransferase center. This is Large ribosomal subunit protein uL6 from Dictyoglomus thermophilum (strain ATCC 35947 / DSM 3960 / H-6-12).